Here is a 243-residue protein sequence, read N- to C-terminus: UPF0246 protein Spy49_1742 (243 aa).

This sequence belongs to the UPF0246 family.

The sequence is that of UPF0246 protein Spy49_1742 from Streptococcus pyogenes serotype M49 (strain NZ131).